The sequence spans 382 residues: PPE family protein PPE44 (382 aa).

Belongs to the mycobacterial PPE family.

It localises to the secreted. The protein resides in the cell wall. The protein localises to the cell surface. Its function is as follows. Virulence factor that modulates host innate immune response. This Mycobacterium tuberculosis (strain CDC 1551 / Oshkosh) protein is PPE family protein PPE44.